A 504-amino-acid chain; its full sequence is Ribonuclease Y (504 aa).

The KH domain occupies 194–279 (TVHVVSLPND…EMVEKAKQEV (86 aa)). The 94-residue stretch at 320–413 (VLKHSMEVAY…VQAADAISAA (94 aa)) folds into the HD domain.

It belongs to the RNase Y family.

Functionally, endoribonuclease that initiates mRNA decay. The chain is Ribonuclease Y from Clostridium novyi (strain NT).